We begin with the raw amino-acid sequence, 465 residues long: Cysteine--tRNA ligase (465 aa).

Cys30 serves as a coordination point for Zn(2+). The 'HIGH' region motif lies at 32-42 (ITVYDYCHIGH). Zn(2+) contacts are provided by Cys214, His239, and Glu243. The 'KMSKS' region motif lies at 271–275 (KMSKS). Lys274 lines the ATP pocket.

This sequence belongs to the class-I aminoacyl-tRNA synthetase family. As to quaternary structure, monomer. Zn(2+) serves as cofactor.

Its subcellular location is the cytoplasm. It carries out the reaction tRNA(Cys) + L-cysteine + ATP = L-cysteinyl-tRNA(Cys) + AMP + diphosphate. The sequence is that of Cysteine--tRNA ligase from Burkholderia mallei (strain NCTC 10229).